The following is an 885-amino-acid chain: MEIRVGSAVFSSRFDSGNLARVERVEASEAAGESSRSASVPQPDYEFNVWTRPDCASTEFENGNRSWFYFSVRGLLPGKLLKINMMNMNKQSKLYTQGMAPFVRTLPVKTRWERVRDRPTFEMSDSQFILSFVHRLLDVRGVTTYFSFCYPFSYAECQDMMLQLDHKFLSSTSTHTACSPPESIYYHRELLCHSLDGHRVDLITVSSCHGLLEEREPRLDKLFPDLSTARSHRFTGKRVFFVSSRVHPGETPSSFVFNGFLNFILSQEDPRAQTLRRMFVFKLIPMLNPDGVVRGHYRTDSRGVNLNRQYVNPSPDLHPSIYGAKSLLLYHHIHNRLGHASGSALKTSNQSNTSPPVATPTERERCMNLRNEAERGEGPTFDLSEIPMQLEESWEKSGVQREAEHSDENESAQSRGETNSAPSEQVPPQESGVAYYIDLHGHASKRGCFMYGNNLTEESQQVENMLYAKLISLNCAHFDFLGCNFSEKNMYARDKRDGQSKEGSGRVAIHKAIGLVHSYTLECNYNTGRSVNTIPPACHDNGRATPPPPPAFPPKYTPEVYEQVGRAVAVAALDMAECNPWPRLVLSEHSSLLNLRASILKHVRNSTGLTSNNRRNTHCKTSSSPPKPVSLSTSASENSLNRTRSTTNVQGSRQTPQLKSSPSFTFGTTAHRPSHRSLGPVRECKAQEKRRPPPPPLPHHHHQQHQRLSVRLSAPVRAPLSPSSSSSSSSSSPSSSSSAPGPGSISLAGNSCPEFRPANQIKELRGGRGKGGRSGPAYCHSSQQRTALTTKEPLQDSLDILTSIEYSRCELQPRPSRIPVRRELQSSVIPLSSTETPTMRVWKLIKPGLKKHLAGVSGKDRLSTKALLKNSSRQTDQHIHRSLPT.

Residues Tyr-150–Ala-576 enclose the Peptidase M14 domain. Residues His-247 and Glu-250 each coordinate Zn(2+). Disordered stretches follow at residues Ser-341–Glu-364 and Glu-392–Pro-428. The span at Ala-344 to Pro-356 shows a compositional bias: polar residues. The segment covering Ser-393–Glu-408 has biased composition (basic and acidic residues). Polar residues predominate over residues Ser-411 to Pro-428. Zn(2+) is bound at residue His-440. Residue Glu-522 is the Proton donor/acceptor of the active site. A compositionally biased stretch (polar residues) spans Ser-606 to Thr-668. 2 disordered regions span residues Ser-606–Leu-788 and Ala-866–Thr-885. A compositionally biased stretch (basic and acidic residues) spans Arg-682–Arg-691. Positions Leu-712–Gly-749 are enriched in low complexity.

The protein belongs to the peptidase M14 family. Zn(2+) serves as cofactor.

The protein resides in the cytoplasm. It localises to the cytosol. It is found in the nucleus. Its subcellular location is the cytoskeleton. The protein localises to the spindle. The protein resides in the midbody. It carries out the reaction gamma-L-glutamyl-L-glutamyl-[protein] + H2O = L-glutamyl-[protein] + L-glutamate. It catalyses the reaction (L-glutamyl)(n+1)-gamma-L-glutamyl-L-glutamyl-[protein] + H2O = (L-glutamyl)(n)-gamma-L-glutamyl-L-glutamyl-[protein] + L-glutamate. The enzyme catalyses C-terminal L-alpha-aminoacyl-L-glutamyl-[tubulin] + H2O = C-terminal L-alpha-aminoacyl-[tubulin] + L-glutamate. The catalysed reaction is C-terminal L-alpha-aminoacyl-L-glutamyl-L-glutamyl-[tubulin] + H2O = C-terminal L-alpha-aminoacyl-L-glutamyl-[tubulin] + L-glutamate. In terms of biological role, metallocarboxypeptidase that mediates deglutamylation of tubulin and non-tubulin target proteins. Catalyzes the removal of polyglutamate side chains present on the gamma-carboxyl group of glutamate residues within the C-terminal tail of alpha- and beta-tubulin. Cleaves alpha- and gamma-linked polyglutamate tubulin side-chain, as well as the branching point glutamate. Also catalyzes the removal of alpha-linked glutamate residues from the carboxy-terminus of alpha-tubulin. This is Cytosolic carboxypeptidase-like protein 5 (agbl5) from Danio rerio (Zebrafish).